Reading from the N-terminus, the 668-residue chain is Acyl-CoA-binding domain-containing protein 4 (668 aa).

Residues Tyr-12–Ser-106 enclose the ACB domain. Residues Lys-33, Tyr-48 to Gln-52, and Lys-74 contribute to the an acyl-CoA site. 6 Kelch repeats span residues Lys-195 to Ala-242, Lys-255 to Lys-305, Leu-307 to Glu-356, Phe-358 to Glu-407, Asn-408 to Ser-456, and Val-463 to Ala-508. Phosphoserine is present on residues Ser-515 and Ser-520. The stretch at Lys-538 to Gln-647 forms a coiled coil. A disordered region spans residues Gln-639–Pro-668.

It belongs to the ACBP family. In terms of assembly, interacts with RAP2-3/EBP, an ethylene-responsive element binding protein. As to expression, mostly expressed in roots, stems, and leaves, and, to a lower extent, in flowers and siliques.

Its subcellular location is the cytoplasm. Its function is as follows. Binds medium- and long-chain acyl-CoA esters with very high affinity. Can interact in vitro with oleoyl-CoA, barely with palmitoyl-CoA, but not with arachidonyl-CoA. May function as an intracellular carrier of acyl-CoA esters. Plays a role in the biosynthesis of membrane lipids including galactolipids and phospholipids. The polypeptide is Acyl-CoA-binding domain-containing protein 4 (ACBP4) (Arabidopsis thaliana (Mouse-ear cress)).